The primary structure comprises 352 residues: Protein RecA (352 aa).

Position 67 to 74 (67 to 74 (GPESSGKT)) interacts with ATP. The interval 333-352 (DSTPDFAVDGNDAEETEQDF) is disordered. Over residues 343 to 352 (NDAEETEQDF) the composition is skewed to acidic residues.

It belongs to the RecA family.

Its subcellular location is the cytoplasm. In terms of biological role, can catalyze the hydrolysis of ATP in the presence of single-stranded DNA, the ATP-dependent uptake of single-stranded DNA by duplex DNA, and the ATP-dependent hybridization of homologous single-stranded DNAs. It interacts with LexA causing its activation and leading to its autocatalytic cleavage. The polypeptide is Protein RecA (Klebsiella pneumoniae (strain 342)).